The primary structure comprises 340 residues: Uroporphyrinogen decarboxylase (340 aa).

Residues 21–25 (RQAGR), F40, D71, Y147, S202, and H316 contribute to the substrate site.

Belongs to the uroporphyrinogen decarboxylase family. As to quaternary structure, homodimer.

It is found in the cytoplasm. It carries out the reaction uroporphyrinogen III + 4 H(+) = coproporphyrinogen III + 4 CO2. Its pathway is porphyrin-containing compound metabolism; protoporphyrin-IX biosynthesis; coproporphyrinogen-III from 5-aminolevulinate: step 4/4. Functionally, catalyzes the decarboxylation of four acetate groups of uroporphyrinogen-III to yield coproporphyrinogen-III. This is Uroporphyrinogen decarboxylase from Wolinella succinogenes (strain ATCC 29543 / DSM 1740 / CCUG 13145 / JCM 31913 / LMG 7466 / NCTC 11488 / FDC 602W) (Vibrio succinogenes).